Consider the following 209-residue polypeptide: Kynurenine formamidase (209 aa).

Trp20 contacts substrate. The Zn(2+) site is built by His50, His54, and Asp56. Residue His60 is the Proton donor/acceptor of the active site. Zn(2+)-binding residues include His161 and Glu173.

Belongs to the Cyclase 1 superfamily. KynB family. As to quaternary structure, homodimer. Zn(2+) is required as a cofactor.

It catalyses the reaction N-formyl-L-kynurenine + H2O = L-kynurenine + formate + H(+). The protein operates within amino-acid degradation; L-tryptophan degradation via kynurenine pathway; L-kynurenine from L-tryptophan: step 2/2. Its function is as follows. Catalyzes the hydrolysis of N-formyl-L-kynurenine to L-kynurenine, the second step in the kynurenine pathway of tryptophan degradation. This Bacillus mycoides (strain KBAB4) (Bacillus weihenstephanensis) protein is Kynurenine formamidase.